Here is a 157-residue protein sequence, read N- to C-terminus: 2-C-methyl-D-erythritol 2,4-cyclodiphosphate synthase (157 aa).

Aspartate 8 and histidine 10 together coordinate a divalent metal cation. 4-CDP-2-C-methyl-D-erythritol 2-phosphate contacts are provided by residues 8–10 (DVH) and 34–35 (HS). Histidine 42 is a binding site for a divalent metal cation. 4-CDP-2-C-methyl-D-erythritol 2-phosphate contacts are provided by residues 56 to 58 (DIG), 61 to 65 (FPDTD), 100 to 106 (AQAPKMA), 132 to 135 (TTTE), phenylalanine 139, and arginine 142.

Belongs to the IspF family. In terms of assembly, homotrimer. It depends on a divalent metal cation as a cofactor.

The catalysed reaction is 4-CDP-2-C-methyl-D-erythritol 2-phosphate = 2-C-methyl-D-erythritol 2,4-cyclic diphosphate + CMP. It functions in the pathway isoprenoid biosynthesis; isopentenyl diphosphate biosynthesis via DXP pathway; isopentenyl diphosphate from 1-deoxy-D-xylulose 5-phosphate: step 4/6. In terms of biological role, involved in the biosynthesis of isopentenyl diphosphate (IPP) and dimethylallyl diphosphate (DMAPP), two major building blocks of isoprenoid compounds. Catalyzes the conversion of 4-diphosphocytidyl-2-C-methyl-D-erythritol 2-phosphate (CDP-ME2P) to 2-C-methyl-D-erythritol 2,4-cyclodiphosphate (ME-CPP) with a corresponding release of cytidine 5-monophosphate (CMP). The polypeptide is 2-C-methyl-D-erythritol 2,4-cyclodiphosphate synthase (Pseudomonas savastanoi pv. phaseolicola (strain 1448A / Race 6) (Pseudomonas syringae pv. phaseolicola (strain 1448A / Race 6))).